We begin with the raw amino-acid sequence, 620 residues long: MSQHKNSVGLLVSAVGVVFGDIGTSPLYAMKETFAGHHPIMVSPENIFGVLSLVFWTVMLLVTVKYVILIMRADNHGEGGSLALLALVTELTRGRRVHYPLMLLGVIAAALFYGDSMITPAISVLSAVEGLEVVTPDLKAYVVPITALVLTGLFAIQSRGTALVGRLFGPVMCLWFVTLALLGIANIVRAPEVLEAISPTFAIEFVIRHPLMSFYALGTVVLAVTGGEALYTDMGHFGRFPIRLGWFSLVLPALLLNYFGQGALLIADPAAIQNPFFRMGPEWMVMPMVALATLATVIASQAVISGAFSVARQAIQLGLLPRMTIVHTSGEEAGQIYVPFTNWTLYFAVMALVIGFQSSSNLAAAYGIAVTGTMMIDTILVSFVMALLWRWNMALVIVVAGTLLLVDFAYFAANIIKVAQGGWFPLFIGFISFTVLTTWRRGRALVRKQLKKQAVPLDVVLRALGPNVSRARGTAVFLTAATDGVPPALLHNLKHNQTVHQRVVLATVTTAETPYVPDSERVHMTDIGDGFHRLIIRYGFMQTPDIPAALTLCKQFGHEFNMMSTSFFLSRETFVPSLNPGMALWRERLFTFMTLNATRATTFFKIPTDRVVELGTQLEI.

12 helical membrane passes run 8–28 (VGLL…SPLY), 50–70 (VLSL…VILI), 102–122 (MLLG…TPAI), 136–156 (PDLK…LFAI), 168–188 (FGPV…ANIV), 211–231 (LMSF…EALY), 246–266 (WFSL…ALLI), 284–304 (MVMP…QAVI), 336–356 (IYVP…VIGF), 368–388 (IAVT…MALL), 393–413 (MALV…YFAA), and 415–435 (IIKV…SFTV).

It belongs to the HAK/KUP transporter (TC 2.A.72) family.

It localises to the cell inner membrane. It catalyses the reaction K(+)(in) + H(+)(in) = K(+)(out) + H(+)(out). In terms of biological role, transport of potassium into the cell. Likely operates as a K(+):H(+) symporter. In Rhodopseudomonas palustris (strain HaA2), this protein is Probable potassium transport system protein Kup.